Consider the following 233-residue polypeptide: Probable septum site-determining protein MinC (233 aa).

The interval 104-124 is disordered; it reads QKMATPEPAPAPAPVVDPNAP.

Belongs to the MinC family. As to quaternary structure, interacts with MinD and FtsZ.

Its function is as follows. Cell division inhibitor that blocks the formation of polar Z ring septums. Rapidly oscillates between the poles of the cell to destabilize FtsZ filaments that have formed before they mature into polar Z rings. Prevents FtsZ polymerization. This Serratia proteamaculans (strain 568) protein is Probable septum site-determining protein MinC.